We begin with the raw amino-acid sequence, 599 residues long: uncharacterized protein (599 aa).

49–56 lines the ATP pocket; the sequence is GPPGSGKT. The region spanning 416–599 is the Macro domain; that stretch reads AEVRKELEYK…TKIFEEKFSV (184 aa).

This sequence in the N-terminal section; belongs to the AAA ATPase family. RarA/MGS1/WRNIP1 subfamily.

This is an uncharacterized protein from Thermotoga maritima (strain ATCC 43589 / DSM 3109 / JCM 10099 / NBRC 100826 / MSB8).